We begin with the raw amino-acid sequence, 121 residues long: SPbeta prophage-derived uncharacterized protein YorW (121 aa).

In Bacillus subtilis (strain 168), this protein is SPbeta prophage-derived uncharacterized protein YorW (yorW).